The primary structure comprises 635 residues: MVSIRLPDGSVRQYEHPVTVAEVAASIGPGLAKAALGGKLDGELVDTSTVIDRDASLAIVTDKDADGLDIIRHSTAHLLAYAVKELYPDAQVTIGPVIDNGFYYDFSYNRPFTPEDLEKIEKRMQELAKKDEPVTRRVVSRDEAAGYFRSIGEKYKAEIIESIPQSDEIKLYSHGGFTDLCRGPHVPSTGKLKVFKLMKVAGAYWRGDSKNEQLQRIYGTAWTKKEDQDQYLHMLEEAEKRDHRKLGKQLDLFHMQEESPGMVFWHPKGWALWQQVEQYMRRRVNEAGYLEIKTPMIMDRSLWEASGHWQNYRENMFTTESEKRDYAIKPMNCPGHVQVFKHGLRSYRDLPLRYAEFGSCHRNEASGALHGLMRVRGFVQDDAHIFCTEDQFISESIAFNTLAMSVYKDFGFDHIDIKLSLRPDQRAGTDETWARAEQGLRDALTACGLTWEELPGEGAFYGPKIEYHIKDALGRSWQCGTLQLDMVLPERLGAEYVAEDNSRRRPVMLHRAIVGSMERFLGILIEHHAGAMPVWLAPYQAIVLNIAESQAEYAQSLTQTLQKQGVRVAADLRNEKISYKIREHTLEKVPYLLVVGDKERDAQTVAVRARGGVDLGVMPVEAFVERLQEDLRSFK.

In terms of domain architecture, TGS spans 1–61 (MVSIRLPDGS…DRDASLAIVT (61 aa)). The interval 242–533 (DHRKLGKQLD…LIEHHAGAMP (292 aa)) is catalytic. The Zn(2+) site is built by Cys333, His384, and His510.

Belongs to the class-II aminoacyl-tRNA synthetase family. In terms of assembly, homodimer. Zn(2+) serves as cofactor.

It is found in the cytoplasm. It carries out the reaction tRNA(Thr) + L-threonine + ATP = L-threonyl-tRNA(Thr) + AMP + diphosphate + H(+). Its function is as follows. Catalyzes the attachment of threonine to tRNA(Thr) in a two-step reaction: L-threonine is first activated by ATP to form Thr-AMP and then transferred to the acceptor end of tRNA(Thr). Also edits incorrectly charged L-seryl-tRNA(Thr). In Burkholderia orbicola (strain MC0-3), this protein is Threonine--tRNA ligase.